The sequence spans 170 residues: Urease accessory protein UreE (170 aa).

It belongs to the UreE family.

It is found in the cytoplasm. In terms of biological role, involved in urease metallocenter assembly. Binds nickel. Probably functions as a nickel donor during metallocenter assembly. The chain is Urease accessory protein UreE from Helicobacter pylori (strain G27).